The sequence spans 743 residues: Inhibitor of nuclear factor kappa-B kinase subunit alpha (743 aa).

Positions 15–300 (WDMKDRLGTG…MDCGRPQCFV (286 aa)) constitute a Protein kinase domain. ATP-binding positions include 21 to 29 (LGTGGFGNV) and Lys44. The active-site Proton acceptor is the Asp144. Residues 453-474 (LLRFNTNLTKMKNTMVSASQQL) form a leucine-zipper region. Residues 736–741 (LDFSWL) are NEMO-binding.

This sequence belongs to the protein kinase superfamily. Ser/Thr protein kinase family. I-kappa-B kinase subfamily.

Its subcellular location is the cytoplasm. The protein localises to the nucleus. It catalyses the reaction L-seryl-[I-kappa-B protein] + ATP = O-phospho-L-seryl-[I-kappa-B protein] + ADP + H(+). Activated when phosphorylated and inactivated when dephosphorylated. Functionally, phosphorylates inhibitors of NF-kappa-B thus leading to the dissociation of the inhibitor/NF-kappa-B complex and ultimately the degradation of the inhibitor. Phosphorylates 'Ser-10' of histone H3 at NF-kappa-B-regulated promoters during inflammatory responses triggered by cytokines. This Xenopus tropicalis (Western clawed frog) protein is Inhibitor of nuclear factor kappa-B kinase subunit alpha (chuk).